The chain runs to 103 residues: Cell division protein FtsB (103 aa).

The Cytoplasmic portion of the chain corresponds to Met1–Lys3. A helical transmembrane segment spans residues Leu4–Phe21. The Periplasmic portion of the chain corresponds to Gly22–Arg103. Positions Arg31 to Ala71 form a coiled coil.

It belongs to the FtsB family. In terms of assembly, part of a complex composed of FtsB, FtsL and FtsQ.

Its subcellular location is the cell inner membrane. Its function is as follows. Essential cell division protein. May link together the upstream cell division proteins, which are predominantly cytoplasmic, with the downstream cell division proteins, which are predominantly periplasmic. The chain is Cell division protein FtsB from Shigella boydii serotype 18 (strain CDC 3083-94 / BS512).